Reading from the N-terminus, the 881-residue chain is Ribonucleoside-diphosphate reductase large subunit (881 aa).

Positions 69 to 160 (TIYLDHNGSI…MTNLHDNTSD (92 aa)) constitute an ATP-cone domain. Substrate-binding positions include Thr271, 286–287 (SC), Gly315, 493–497 (NLCCE), and 675–679 (PTAST). Cysteines 287 and 510 form a disulfide. Asn493 acts as the Proton acceptor in catalysis. The Cysteine radical intermediate role is filled by Cys495. Glu497 serves as the catalytic Proton acceptor.

Belongs to the ribonucleoside diphosphate reductase large chain family. As to quaternary structure, heterotetramer composed of a homodimer of the large subunit (R1) and a homodimer of the small subunit (R2). Larger multisubunit protein complex are also active, composed of (R1)n(R2)n.

The catalysed reaction is a 2'-deoxyribonucleoside 5'-diphosphate + [thioredoxin]-disulfide + H2O = a ribonucleoside 5'-diphosphate + [thioredoxin]-dithiol. Its activity is regulated as follows. Under complex allosteric control mediated by deoxynucleoside triphosphates and ATP binding. The type of nucleotide bound at the specificity site determines substrate preference. It seems probable that ATP makes the enzyme reduce CDP and UDP, dGTP favors ADP reduction and dTTP favors GDP reduction. Functionally, ribonucleoside-diphosphate reductase holoenzyme provides the precursors necessary for viral DNA synthesis. Allows virus growth in non-dividing cells. Catalyzes the biosynthesis of deoxyribonucleotides from the corresponding ribonucleotides. The sequence is that of Ribonucleoside-diphosphate reductase large subunit (RNR1) from Acanthamoeba polyphaga mimivirus (APMV).